Consider the following 535-residue polypeptide: T-box transcription factor TBX21 (535 aa).

The segment at 1 to 62 (MGIVEPGCGD…SLGSPYPGGA (62 aa)) is disordered. At Ser53 the chain carries Phosphoserine. A Phosphotyrosine modification is found at Tyr77. The segment at 83-109 (AAGFPGAGESFPPPADAEGYQPGEGYA) is disordered. Tyr118 is subject to Phosphotyrosine. The segment at residues 141 to 326 (LNNHLLWSKF…NNPFAKGFRE (186 aa)) is a DNA-binding region (T-box). The residue at position 220 (Tyr220) is a Phosphotyrosine; by ABL1. Position 225 is a phosphoserine (Ser225). Tyr266 is subject to Phosphotyrosine; by ABL1. At Thr303 the chain carries Phosphothreonine. The residue at position 305 (Tyr305) is a Phosphotyrosine; by ABL1. Lys314 participates in a covalent cross-link: Glycyl lysine isopeptide (Lys-Gly) (interchain with G-Cter in ubiquitin). Residues 449–535 (RPMRTLPMEP…EGQFYNYFPN (87 aa)) are disordered. Over residues 503–520 (SPYPSSGDSSSPAGAPSP) the composition is skewed to low complexity. A Phosphoserine modification is found at Ser513. Tyr530 carries the phosphotyrosine; by ITK modification.

In terms of assembly, interacts with RUNX1, RUNX3, ITK, ABL1, RELA, CDK9 and KDM6B. The phosphorylated form (at Thr-303) interacts with NFATC2. Interacts with SMARCA4 in a KDM6B-dependent manner. Interacts with CCTN1. Interacts with USP10. The phosphorylated form (at Tyr-530) interacts with GATA3. Post-translationally, phosphorylations at Ser-53, Tyr-77, Ser-225 and Ser-513 are regulated by mTORC1. Phosphorylation at Tyr-530 is essential for its interaction GATA3. Phosphorylation at Tyr-220, Tyr-266 and Tyr-305 enhances its transcriptional activator activity. Phosphorylation at Thr-303 is required for its interaction with NFATC2. In terms of processing, ubiquitinated at Lys-314, leading to its degradation by the proteasome. Ubiquitination is essential for controlling protein stability, binding to the T-box-binding element of the IFN-gamma promoter, and for interaction with NFATC2 through induction of phosphorylation at Thr-303. Deubiquitinated by USP10 leading to its stabilization. As to expression, T-cell specific.

The protein localises to the nucleus. In terms of biological role, lineage-defining transcription factor which initiates Th1 lineage development from naive Th precursor cells both by activating Th1 genetic programs and by repressing the opposing Th2 and Th17 genetic programs. Activates transcription of a set of genes important for Th1 cell function, including those encoding IFN-gamma and the chemokine receptor CXCR3. Induces permissive chromatin accessibilty and CpG methylation in IFNG. Activates IFNG and CXCR3 genes in part by recruiting chromatin remodeling complexes including KDM6B, a SMARCA4-containing SWI/SNF-complex, and an H3K4me2-methyltransferase complex to their promoters and all of these complexes serve to establish a more permissive chromatin state conducive with transcriptional activation. Can activate Th1 genes also via recruitment of Mediator complex and P-TEFb (composed of CDK9 and CCNT1/cyclin-T1) in the form of the super elongation complex (SEC) to super-enhancers and associated genes in activated Th1 cells. Inhibits the Th17 cell lineage commitment by blocking RUNX1-mediated transactivation of Th17 cell-specific transcriptinal regulator RORC. Inhibits the Th2 cell lineage commitment by suppressing the production of Th2 cytokines, such as IL-4, IL-5, and IL- 13, via repression of transcriptional regulators GATA3 and NFATC2. Protects Th1 cells from amplifying aberrant type-I IFN response in an IFN-gamma abundant microenvironment by acting as a repressor of type-I IFN transcription factors and type-I IFN-stimulated genes. Acts as a regulator of antiviral B-cell responses; controls chronic viral infection by promoting the antiviral antibody IgG2a isotype switching and via regulation of a broad antiviral gene expression program. Required for the correct development of natural killer (NK) and mucosal-associated invariant T (MAIT) cells. In Homo sapiens (Human), this protein is T-box transcription factor TBX21 (TBX21).